Here is a 504-residue protein sequence, read N- to C-terminus: Endosomal/lysosomal proton channel TMEM175 (504 aa).

The tract at residues 1–27 (MSQPRTPEQALDTPGDCPPGRRDEDAG) is disordered. Over 1–33 (MSQPRTPEQALDTPGDCPPGRRDEDAGEGIQCS) the chain is Cytoplasmic. Phosphothreonine is present on Thr-6. Residues 34–56 (QRMLSFSDALLSIIATVMILPVT) traverse the membrane as a helical segment. Positions 35 to 41 (RMLSFSD) match the RxxxFSD motif 1 motif. Residues 57–77 (HTEISPEQQFDRSVQRLLATR) are Lumenal-facing. Positions 58–63 (TEISPE) are short helix H1-1. The short helix H2-1 stretch occupies residues 65–71 (QFDRSVQ). A helical transmembrane segment spans residues 78-100 (IAVYLMTFLIVTVAWAAHTRLFQ). Over 101–106 (VVGKTD) the chain is Cytoplasmic. A helical transmembrane segment spans residues 107–128 (DTLALLNLACMMTITFLPYTFS). The Lumenal portion of the chain corresponds to 129–138 (LMVTFPDVPL). A helical membrane pass occupies residues 139 to 160 (GIFLFCVCVIAIGVVQALIVGY). Topologically, residues 161–184 (AFHFPHLLSPQIQRSAHRALYRRH) are cytoplasmic. The chain crosses the membrane as a helical span at residues 185–205 (VLGIVLQGPALCFAAAIFSLF). At 206–210 (FVPLS) the chain is on the lumenal side. Residues 211 to 230 (YLLMVTVILLPYVSKVTGWC) traverse the membrane as a helical segment. The Cytoplasmic portion of the chain corresponds to 231-257 (RDRLLGHREPSAHPVEVFSFDLHEPLS). Residues 258–282 (KERVEAFSDGVYAIVATLLILDICE) traverse the membrane as a helical segment. A RxxxFSD motif 2 motif is present at residues 260 to 266 (RVEAFSD). Residues 283 to 309 (DNVPDPKDVKERFSGSLVAALSATGPR) lie on the Lumenal side of the membrane. Residues 288-296 (PKDVKERFS) are short helix H1-2. The tract at residues 298–304 (SLVAALS) is short helix H2-2. The helical transmembrane segment at 310-332 (FLAYFGSFATVGLLWFAHHSLFL) threads the bilayer. At 333–338 (HVRKAT) the chain is on the cytoplasmic side. Residues 339 to 360 (RAMGLLNTLSLAFVGGLPLAYQ) traverse the membrane as a helical segment. Residues 361-375 (QTSAFARQPRDELER) lie on the Lumenal side of the membrane. The helical transmembrane segment at 376–396 (VRVSCTIIFLASIFQLAMWTT) threads the bilayer. The Cytoplasmic segment spans residues 397-416 (ALLHQAETLQPSVWFGGREH). The helical transmembrane segment at 417 to 440 (VLMFAKLALYPCASLLAFASTCLL) threads the bilayer. Residues 441 to 442 (SR) lie on the Lumenal side of the membrane. A helical membrane pass occupies residues 443–469 (FSVGIFHLMQIAVPCAFLLLRLLVGLA). Over 470–504 (LATLRVLRGLARPEHPPPAPTGQDDPQSQLLPAPC) the chain is Cytoplasmic. A disordered region spans residues 483-504 (EHPPPAPTGQDDPQSQLLPAPC). The span at 493-504 (DDPQSQLLPAPC) shows a compositional bias: polar residues.

Belongs to the TMEM175 family. As to quaternary structure, homodimer. Interacts with AKT (AKT1, AKT2 or AKT3); leading to formation of the lysoK(GF) complex, which activates the channel. Interacts with LAMP1; inhibiting the proton channel activity of TMEM175. Interacts with LAMP2; inhibiting the proton channel activity of TMEM175. Widely expressed.

The protein resides in the endosome membrane. Its subcellular location is the lysosome membrane. It carries out the reaction H(+)(in) = H(+)(out). The enzyme catalyses K(+)(in) = K(+)(out). Its activity is regulated as follows. Active at low pH (under pH 4.6): proton channel activity is activated by luminal side protons. Polyunsaturated fatty acids, such as arachidonic acid, also activate the channel activity. Proton channel activity is directly inhibited by LAMP1 or LAMP2, facilitating lysosomal acidification. Channel activity is activated following interaction with AKT (AKT1, AKT2 or AKT3): interaction promotes activation from closed to an open state. Activation by AKT is independent of AKT serine/threonine-protein kinase activity. In terms of biological role, proton-activated proton channel that catalyzes proton efflux from endosomes and lysosomes to maintain a steady-state pH. Activated at low pH (under pH 4.6) by luminal side protons: selectively mediates lysosomal proton release from lysosomes, eliciting a proton leak that balances V-ATPase activity to maintain pH homeostasis. Regulation of lumenal pH stability is required for autophagosome-lysosome fusion. Also acts as a potassium channel at higher pH, regulating potassium conductance in endosomes and lysosomes. Constitutes the pore-forming subunit of the lysoK(GF) complex, a complex activated by extracellular growth factors. The lysoK(GF) complex is composed of TMEM175 and AKT (AKT1, AKT2 or AKT3), a major target of growth factor receptors: in the complex, TMEM175 channel is opened by conformational changes by AKT, leading to its activation. The lysoK(GF) complex is required to protect neurons against stress-induced damage. This chain is Endosomal/lysosomal proton channel TMEM175, found in Homo sapiens (Human).